We begin with the raw amino-acid sequence, 207 residues long: Flavin-dependent thymidylate synthase (207 aa).

Residues 1 to 204 (MQITLLFHTP…KFIFEHCLHK (204 aa)) form the ThyX domain. FAD-binding positions include serine 50 and 74-76 (RHR). Residues 71–74 (EVAR), 84–86 (STR), and lysine 143 contribute to the dUMP site. A ThyX motif motif is present at residues 74-84 (RHRHTSPSVKS). FAD is bound by residues 159–161 (NAR) and asparagine 165. Arginine 170 is a dUMP binding site. Residue arginine 170 is the Involved in ionization of N3 of dUMP, leading to its activation of the active site.

Belongs to the thymidylate synthase ThyX family. In terms of assembly, homotetramer. FAD serves as cofactor.

The catalysed reaction is dUMP + (6R)-5,10-methylene-5,6,7,8-tetrahydrofolate + NADPH + H(+) = dTMP + (6S)-5,6,7,8-tetrahydrofolate + NADP(+). Its pathway is pyrimidine metabolism; dTTP biosynthesis. Functionally, catalyzes the reductive methylation of 2'-deoxyuridine-5'-monophosphate (dUMP) to 2'-deoxythymidine-5'-monophosphate (dTMP) while utilizing 5,10-methylenetetrahydrofolate (mTHF) as the methyl donor, and NADPH and FADH(2) as the reductant. In Campylobacter jejuni subsp. jejuni serotype O:2 (strain ATCC 700819 / NCTC 11168), this protein is Flavin-dependent thymidylate synthase.